The sequence spans 252 residues: 5-oxoprolinase subunit A (252 aa).

It belongs to the LamB/PxpA family. In terms of assembly, forms a complex composed of PxpA, PxpB and PxpC.

The catalysed reaction is 5-oxo-L-proline + ATP + 2 H2O = L-glutamate + ADP + phosphate + H(+). Catalyzes the cleavage of 5-oxoproline to form L-glutamate coupled to the hydrolysis of ATP to ADP and inorganic phosphate. The polypeptide is 5-oxoprolinase subunit A (Mycobacterium leprae (strain Br4923)).